The primary structure comprises 191 residues: Apoptosis regulator BHRF1 (191 aa).

The interaction with host VRK2 stretch occupies residues 1–18 (MAYSTREILLALCIRDSR). A glycan (N-linked (GlcNAc...) asparagine; by host) is linked at Asn-22. Positions 89 to 109 (EIFHRGDPSLGRALAWMAWCM) match the BH1 motif. The interval 89 to 142 (EIFHRGDPSLGRALAWMAWCMHACRTLCCNQSTPYYVVDLSVRGMLEASEGLDG) is interaction with host VRK2. Asn-118 carries an N-linked (GlcNAc...) asparagine; by host glycan. The BH2 signature appears at 142-157 (GWIHQQGGWSTLIEDN). A helical membrane pass occupies residues 166–186 (WTLFLAGLTLSLLVICSYLFI).

Belongs to the Bcl-2 family. Interacts with isoform 1 of host VRK2; this interaction is involved in protecting cells from apoptosis. Interacts with host PRA1; this interaction seems to modulate BHRF1 anti-apoptotic activity. Interacts with host BCL2L11. Interacts with host BAD and BBC3. Interacts with BALF1; BALF1 acting as a negative regulator of the survival function of BHRF1. Interacts with host BECN1.

It is found in the host membrane. The protein localises to the host mitochondrion. In terms of biological role, prevents premature death of the host cell during virus production, which would otherwise reduce the amount of progeny virus. Acts as a host B-cell leukemia/lymphoma 2 (Bcl-2) homolog, and interacts with pro-apoptotic proteins to prevent mitochondria permeabilization, release of cytochrome c and subsequent apoptosis of the host cell. In addition, plays a role in the inhibiton of host BECN1-mediated starvation-induced autophagy without affecting basal levels of autophagy. In Homo sapiens (Human), this protein is Apoptosis regulator BHRF1.